The following is an 840-amino-acid chain: DNA helicase MCM8 (840 aa).

The disordered stretch occupies residues 16–54 (QSWKRGRGGGNFSGKWREREHRPDLSKTTGKRTSEQTPQ). Positions 30–40 (KWREREHRPDL) are enriched in basic and acidic residues. One can recognise an MCM domain in the interval 402-609 (LFKLIVNSLC…HHDHLLSEHV (208 aa)). 454 to 461 (GDPGLGKS) is a binding site for ATP. S630 carries the post-translational modification Phosphoserine.

This sequence belongs to the MCM family. Component of the MCM8-MCM9 complex, which forms a hexamer composed of MCM8 and MCM9. Interacts with the DNA mismatch repair (MMR) complex composed at least of MSH2, MSH3, MSH6, PMS1 and MLH1. Interacts with RAD51; the interaction recruits RAD51 to DNA damage sites. Interacts with the MRN complex composed of MRE11, RAD50 and NBN/NBS1. Interacts with CDC6 and ORC2. Interacts with HROB; the interaction recruits the MCM8-MCM9 complex to DNA damage sites. Highest levels in placenta, lung and pancreas. Low levels in skeletal muscle and kidney. Expressed in various tumors with highest levels in colon and lung cancers.

The protein localises to the nucleus. It is found in the chromosome. It carries out the reaction ATP + H2O = ADP + phosphate + H(+). Functionally, component of the MCM8-MCM9 complex, a complex involved in the repair of double-stranded DNA breaks (DBSs) and DNA interstrand cross-links (ICLs) by homologous recombination (HR). Required for DNA resection by the MRE11-RAD50-NBN/NBS1 (MRN) complex by recruiting the MRN complex to the repair site and by promoting the complex nuclease activity. Probably by regulating the localization of the MNR complex, indirectly regulates the recruitment of downstream effector RAD51 to DNA damage sites including DBSs and ICLs. The MCM8-MCM9 complex is dispensable for DNA replication and S phase progression. However, may play a non-essential for DNA replication: may be involved in the activation of the prereplicative complex (pre-RC) during G(1) phase by recruiting CDC6 to the origin recognition complex (ORC). Probably by regulating HR, plays a key role during gametogenesis. Stabilizes MCM9 protein. This Homo sapiens (Human) protein is DNA helicase MCM8 (MCM8).